The following is a 32-amino-acid chain: Snake venom serine proteinase (32 aa).

The Peptidase S1 domain occupies 1–32; the sequence is VIGGDECDINEHRFLVFLTXASGLACGGTLIN.

It belongs to the peptidase S1 family. Snake venom subfamily. Monomer. In terms of processing, contains 6 disulfide bonds. Glycosylated. Expressed by the venom gland.

Its subcellular location is the secreted. Cleaves a kininogen analog with the release of kallidin (lysyl-bradykinin). Completely cleaves fibrinogen Aalpha chain, partially cleaves Bbeta chain and has no activity on gamma chain. This is Snake venom serine proteinase from Bitis arietans (African puff adder).